The chain runs to 277 residues: Shikimate dehydrogenase (NADP(+)) (277 aa).

Residues 15–17 and T62 each bind shikimate; that span reads SLS. The Proton acceptor role is filled by K66. Shikimate contacts are provided by N87 and D102. NADP(+) contacts are provided by residues 127 to 131, 151 to 156, and I219; these read GAGGA and NRTVDK. Position 221 (Y221) interacts with shikimate. G242 provides a ligand contact to NADP(+).

It belongs to the shikimate dehydrogenase family. Homodimer.

It catalyses the reaction shikimate + NADP(+) = 3-dehydroshikimate + NADPH + H(+). It participates in metabolic intermediate biosynthesis; chorismate biosynthesis; chorismate from D-erythrose 4-phosphate and phosphoenolpyruvate: step 4/7. Its function is as follows. Involved in the biosynthesis of the chorismate, which leads to the biosynthesis of aromatic amino acids. Catalyzes the reversible NADPH linked reduction of 3-dehydroshikimate (DHSA) to yield shikimate (SA). This Bacillus cereus (strain ATCC 10987 / NRS 248) protein is Shikimate dehydrogenase (NADP(+)).